A 119-amino-acid polypeptide reads, in one-letter code: MIFNEYEEFCKKMDECIEKYKGKFGCIVTFNGFVREYDLKDGEKVPSKGMKIDEDILEKLKLVIEEAKNKFDVIDILFYHNTGFLSIGERIASIAVFARHRKEGFEALEYIINEMKKYH.

It to Synechocystis PCC 6803 slr0903.

This is an uncharacterized protein from Methanocaldococcus jannaschii (strain ATCC 43067 / DSM 2661 / JAL-1 / JCM 10045 / NBRC 100440) (Methanococcus jannaschii).